Reading from the N-terminus, the 161-residue chain is Nucleotide-binding protein Vapar_3769 (161 aa).

Belongs to the YajQ family.

Functionally, nucleotide-binding protein. This Variovorax paradoxus (strain S110) protein is Nucleotide-binding protein Vapar_3769.